Reading from the N-terminus, the 148-residue chain is uncharacterized protein (148 aa).

This is an uncharacterized protein from Methanocaldococcus jannaschii (strain ATCC 43067 / DSM 2661 / JAL-1 / JCM 10045 / NBRC 100440) (Methanococcus jannaschii).